Consider the following 962-residue polypeptide: Protease 3 (962 aa).

An N-terminal signal peptide occupies residues 1–23 (MPRSIWFKALLLFVALWAPLSQA). H88 lines the Zn(2+) pocket. E91 acts as the Proton acceptor in catalysis. Residues H92 and E169 each coordinate Zn(2+).

The protein belongs to the peptidase M16 family. Monomer. Requires Zn(2+) as cofactor.

The protein resides in the periplasm. The catalysed reaction is Preferential cleavage of 16-Tyr-|-Leu-17 and 25-Phe-|-Tyr-26 bonds of oxidized insulin B chain. Also acts on other substrates of Mw less than 7 kDa such as insulin and glucagon.. Its function is as follows. Endopeptidase that degrades small peptides of less than 7 kDa, such as glucagon and insulin. This is Protease 3 (ptrA) from Escherichia coli O6:H1 (strain CFT073 / ATCC 700928 / UPEC).